The primary structure comprises 73 residues: Conotoxin Gla(3)-TxVI (73 aa).

An N-terminal signal peptide occupies residues 1–19 (MQKLIILLLVAAVLMSAQA). Positions 20–44 (VLQEKRPKEKIKFLSKRKTDAEKQQ) are excised as a propeptide. 3 disulfides stabilise this stretch: Cys-48–Cys-62, Cys-55–Cys-66, and Cys-61–Cys-71. Pro-49 is subject to 4-hydroxyproline. Glu-53 carries the 4-carboxyglutamate; partial modification. Pro-54 carries the 4-hydroxyproline modification. Position 60 is a 4-carboxyglutamate (Glu-60). Residue Trp-64 is modified to 6'-bromotryptophan.

It belongs to the conotoxin O2 superfamily. As to expression, expressed by the venom duct.

The protein resides in the secreted. The chain is Conotoxin Gla(3)-TxVI from Conus textile (Cloth-of-gold cone).